We begin with the raw amino-acid sequence, 206 residues long: Flavin prenyltransferase UbiX (206 aa).

Residues 11 to 13 (GAS), S37, 103 to 106 (SMST), and R138 each bind FMN. Y168 and R184 together coordinate dimethylallyl phosphate.

Belongs to the UbiX/PAD1 family.

The catalysed reaction is dimethylallyl phosphate + FMNH2 = prenylated FMNH2 + phosphate. Its function is as follows. Flavin prenyltransferase that catalyzes the synthesis of the prenylated FMN cofactor (prenyl-FMN) for 4-hydroxy-3-polyprenylbenzoic acid decarboxylase UbiD. The prenyltransferase is metal-independent and links a dimethylallyl moiety from dimethylallyl monophosphate (DMAP) to the flavin N5 and C6 atoms of FMN. The sequence is that of Flavin prenyltransferase UbiX from Synechocystis sp. (strain ATCC 27184 / PCC 6803 / Kazusa).